The following is a 632-amino-acid chain: Mediator of RNA polymerase II transcription subunit 17 (632 aa).

Disordered regions lie at residues 1–21 (MSDS…RPDS) and 50–72 (EDKH…DLET). The span at 11-21 (PIREKRDRPDS) shows a compositional bias: basic and acidic residues. Over residues 58–72 (EEDDEGDKESTDLET) the composition is skewed to acidic residues.

This sequence belongs to the Mediator complex subunit 17 family. In terms of assembly, component of the Mediator complex.

Its subcellular location is the nucleus. In terms of biological role, component of the Mediator complex, a coactivator involved in the regulated transcription of nearly all RNA polymerase II-dependent genes. Mediator functions as a bridge to convey information from gene-specific regulatory proteins to the basal RNA polymerase II transcription machinery. Mediator is recruited to promoters by direct interactions with regulatory proteins and serves as a scaffold for the assembly of a functional preinitiation complex with RNA polymerase II and the general transcription factors. In Emericella nidulans (strain FGSC A4 / ATCC 38163 / CBS 112.46 / NRRL 194 / M139) (Aspergillus nidulans), this protein is Mediator of RNA polymerase II transcription subunit 17 (srb4).